Reading from the N-terminus, the 276-residue chain is Ribosomal RNA small subunit methyltransferase A (276 aa).

6 residues coordinate S-adenosyl-L-methionine: Asn-27, Leu-29, Gly-54, Glu-75, Asp-101, and Asn-122.

Belongs to the class I-like SAM-binding methyltransferase superfamily. rRNA adenine N(6)-methyltransferase family. RsmA subfamily.

The protein localises to the cytoplasm. The catalysed reaction is adenosine(1518)/adenosine(1519) in 16S rRNA + 4 S-adenosyl-L-methionine = N(6)-dimethyladenosine(1518)/N(6)-dimethyladenosine(1519) in 16S rRNA + 4 S-adenosyl-L-homocysteine + 4 H(+). Its function is as follows. Specifically dimethylates two adjacent adenosines (A1518 and A1519) in the loop of a conserved hairpin near the 3'-end of 16S rRNA in the 30S particle. May play a critical role in biogenesis of 30S subunits. This Brucella suis (strain ATCC 23445 / NCTC 10510) protein is Ribosomal RNA small subunit methyltransferase A.